The sequence spans 449 residues: PPKPQPKPPPKPQPKPPPAPTPSPCPPQPPKPQPKPPPAPTPSPCPPQPPKPQPKPPPAPGPSPKPGPSPSPPKPPPSPAPKPVPPPSPSPKPSPPKPPAPSPKPSPPKPPAPSPPKPQNKTIPAVFFFGDSIFDTGNNNNLDTKLKCNYRPYGMDFPMGVATGRFSNGRVASDYISKYLGVKEIVPAYVDKKLQQNNELQQSDLLTGVSFASGGAGYLPQTSESWKVTTMLDQLTYFQDYKKRMKKLVGKKKTKKIVSKGAAIVVAGSNDLIYTYFGNGAQHLKNDVDSFTTMMADSAASFVLQLYGYGARRIGVIGTPPIGCTPSQRVKKKKICNEDLNYAAQLFNSKLVIILGQLSKTLPNSTIVYGDIYSIFSKMLESPEDYGFEEIKKPCCKIGLTKGGVFCKERTLKNMSNASSYLFWDGLHPSQRAYEISNRKLVKKYIHFI.

The span at 1-118 (PPKPQPKPPP…KPPAPSPPKP (118 aa)) shows a compositional bias: pro residues. The segment at 1–123 (PPKPQPKPPP…SPPKPQNKTI (123 aa)) is disordered. S132 acts as the Nucleophile in catalysis. Residues D425 and H428 contribute to the active site.

It belongs to the 'GDSL' lipolytic enzyme family. Found in anther, only in male fertile plants.

This chain is Anther-specific proline-rich protein APG (APG), found in Brassica napus (Rape).